A 199-amino-acid chain; its full sequence is Outer-membrane lipoprotein LolB (199 aa).

The first 28 residues, 1 to 28 (MSACPAPRSPVRWLHAFTLFLLLAVLAG), serve as a signal peptide directing secretion. Cysteine 29 is lipidated: N-palmitoyl cysteine. A lipid anchor (S-diacylglycerol cysteine) is attached at cysteine 29.

It belongs to the LolB family. As to quaternary structure, monomer.

Its subcellular location is the cell outer membrane. Functionally, plays a critical role in the incorporation of lipoproteins in the outer membrane after they are released by the LolA protein. The chain is Outer-membrane lipoprotein LolB from Bordetella pertussis (strain Tohama I / ATCC BAA-589 / NCTC 13251).